The following is a 569-amino-acid chain: Probable ABC transporter permease protein y4fN (569 aa).

Transmembrane regions (helical) follow at residues 10–30 (VFYW…LLVP), 68–88 (VWMT…QVAV), 98–118 (GFLK…AAAG), 121–141 (FTYG…PSLP), 145–165 (FIGW…FHFL), 196–216 (VVLP…LITA), 247–267 (PDMA…LILL), 304–324 (LAYL…LFSF), 363–383 (MSSI…PIMV), 395–415 (ICFV…LIVA), 426–446 (LVLL…SLPL), 480–500 (VVLP…FNNL), and 534–554 (AAVS…VILI). The region spanning 64–268 (LWNTVWMTAA…LVLMGLILLS (205 aa)) is the ABC transmembrane type-1 1 domain. The ABC transmembrane type-1 2 domain occupies 357 to 551 (FFNSMLMSSI…TLIMAFSLAV (195 aa)).

Belongs to the binding-protein-dependent transport system permease family. CysTW subfamily.

It is found in the cell inner membrane. Functionally, probably part of the binding-protein-dependent transport system y4fNOP. Probably responsible for the translocation of the substrate across the membrane. The chain is Probable ABC transporter permease protein y4fN from Sinorhizobium fredii (strain NBRC 101917 / NGR234).